Consider the following 190-residue polypeptide: Riboflavin transporter FmnP (190 aa).

Topologically, residues 1-5 are extracellular; it reads MKVKK. The helical transmembrane segment at 6–26 threads the bilayer; it reads LVVVSMLSSIAFVLMLLNFPF. The Cytoplasmic segment spans residues 27 to 39; sequence PGLPDYLKIDFSD. A helical membrane pass occupies residues 40–60; the sequence is VPAIIAILIYGPLAGIAVEAI. At 61–76 the chain is on the extracellular side; it reads KNVLQYIIQGSMAGVP. Residues 77-97 form a helical membrane-spanning segment; that stretch reads VGQVANFIAGTLFILPTAFLF. Topologically, residues 98 to 109 are cytoplasmic; the sequence is KKLNSAKGLAVS. Residues 110–130 form a helical membrane-spanning segment; sequence LLLGTAAMTILMSILNYVLIL. The Extracellular portion of the chain corresponds to 131–154; sequence PAYTWFLHSPALSDSALKTAVVAG. A helical transmembrane segment spans residues 155–175; the sequence is ILPFNMIKGIVITVVFSLIFI. The Cytoplasmic segment spans residues 176–190; it reads KLKPWIEQQRSAHIH.

This sequence belongs to the prokaryotic riboflavin transporter (P-RFT) (TC 2.A.87) family. Forms a stable energy-coupling factor (ECF) transporter complex composed of a membrane-embedded substrate-binding protein (S component), 2 ATP-binding proteins (A component) and 2 transmembrane proteins (T component). May be able to interact with more than 1 S component at a time.

It localises to the cell membrane. Its activity is regulated as follows. Inhibited by excess of riboflavin or FMN. Also inhibited by protonophores such as CCCP and FCCP or in the absence of glucose. Mediates uptake of riboflavin and roseoflavin, a toxic riboflavin analog; may also transport FMN. Probably a riboflavin-binding protein that interacts with the energy-coupling factor (ECF) ABC-transporter complex. Unlike classic ABC transporters this ECF transporter provides the energy necessary to transport a number of different substrates. The substrates themselves are bound by transmembrane, not extracytoplasmic soluble proteins. This is Riboflavin transporter FmnP (fmnP) from Bacillus subtilis (strain 168).